The primary structure comprises 344 residues: Acyl-CoA ligase clz12 (344 aa).

AMP-binding stretches follow at residues 2–239 (VQRS…IIKV) and 248–322 (ELET…PSGK).

Belongs to the ATP-dependent AMP-binding enzyme family.

The protein operates within secondary metabolite biosynthesis. Its function is as follows. Acyl-CoA ligase; part of the gene cluster that mediates the biosynthesis of squalestatin S1 (SQS1, also known as zaragozic acid A), a heavily oxidized fungal polyketide that offers potent cholesterol lowering activity by targeting squalene synthase (SS). SQS1 is composed of a 2,8-dioxobicyclic[3.2.1]octane-3,4,5-tricarboxyclic acid core that is connected to two lipophilic polyketide arms. These initial steps feature the priming of an unusual benzoic acid starter unit onto the highly reducing polyketide synthase clz14, followed by oxaloacetate extension and product release to generate a tricarboxylic acid containing product. The phenylalanine ammonia lyase (PAL) clz10 and the acyl-CoA ligase clz12 are involved in transforming phenylalanine into benzoyl-CoA. The citrate synthase-like protein clz17 is involved in connecting the C-alpha-carbons of the hexaketide chain and oxaloacetate to afford the tricarboxylic acid unit. The potential hydrolytic enzymes, clz11 and clz13, are in close proximity to pks2 and may participate in product release. On the other side, the tetraketide arm is synthesized by a the squalestatin tetraketide synthase clz2 and enzymatically esterified to the core in the last biosynthetic step, by the acetyltransferase clz6. The biosynthesis of the tetraketide must involve 3 rounds of chain extension. After the first and second rounds methyl-transfer occurs, and in all rounds of extension the ketoreductase and dehydratase are active. The enoyl reductase and C-MeT of clz2 are not active in the final round of extension. The acetyltransferase clz6 appears to have a broad substrate selectivity for its acyl CoA substrate, allowing the in vitro synthesis of novel squalestatins. The biosynthesis of SQS1 requires several oxidative steps likely performed by oxidoreductases clz3, clz15 and clz16. Finally, in support of the identification of the cluster as being responsible for SQS1 production, the cluster contains a gene encoding a putative squalene synthase (SS) clz20, suggesting a likely mechanism for self-resistance. The polypeptide is Acyl-CoA ligase clz12 (Cochliobolus lunatus (Filamentous fungus)).